Consider the following 302-residue polypeptide: Ornithine carbamoyltransferase (302 aa).

Carbamoyl phosphate-binding positions include 52–55, Gln-79, Arg-103, and 130–133; these read STRT and HPCQ. L-ornithine contacts are provided by residues Asn-161, Asp-221, and 225–226; that span reads SM. Carbamoyl phosphate is bound by residues 261-262 and Arg-289; that span reads CL.

The protein belongs to the aspartate/ornithine carbamoyltransferase superfamily. OTCase family.

The protein resides in the cytoplasm. It carries out the reaction carbamoyl phosphate + L-ornithine = L-citrulline + phosphate + H(+). The protein operates within amino-acid biosynthesis; L-arginine biosynthesis; L-arginine from L-ornithine and carbamoyl phosphate: step 1/3. In terms of biological role, reversibly catalyzes the transfer of the carbamoyl group from carbamoyl phosphate (CP) to the N(epsilon) atom of ornithine (ORN) to produce L-citrulline. In Methanosarcina acetivorans (strain ATCC 35395 / DSM 2834 / JCM 12185 / C2A), this protein is Ornithine carbamoyltransferase.